Here is a 189-residue protein sequence, read N- to C-terminus: Mitochondrial FAD-linked sulfhydryl oxidase ERV1 (189 aa).

Residues 83–183 form the ERV/ALR sulfhydryl oxidase domain; that stretch reads DPPDVEQLGR…FDCNFWEKRW (101 aa). FAD-binding positions include 88 to 95, histidine 99, and tyrosine 128; that span reads EQLGRSSW. 2 cysteine pairs are disulfide-bonded: cysteine 130–cysteine 133 and cysteine 159–cysteine 176. Residues 159–171 and 182–183 contribute to the FAD site; these read CEAH…KLRK and RW.

In terms of assembly, homodimer. Interacts with MIA40, forming transient intermolecular disulfide bridges. The cofactor is FAD.

It localises to the mitochondrion intermembrane space. It catalyses the reaction 2 R'C(R)SH + O2 = R'C(R)S-S(R)CR' + H2O2. Its function is as follows. FAD-dependent sulfhydryl oxidase that catalyzes disulfide bond formation. Required for the import and folding of small cysteine-containing proteins in the mitochondrial intermembrane space (IMS). Forms a redox cycle with MIA40 that involves a disulfide relay system. Important for maintaining the cysteine residues in MIA40 in an oxidized state. Reduced ERV1 is reoxidized by cytochrome c. Required for the maturation of cytoplasmic, but not of mitochondrial Fe/S proteins. The polypeptide is Mitochondrial FAD-linked sulfhydryl oxidase ERV1 (ERV1) (Saccharomyces cerevisiae (strain ATCC 204508 / S288c) (Baker's yeast)).